The following is a 306-amino-acid chain: Ornithine carbamoyltransferase (306 aa).

Residues 46-49, Gln-73, Arg-97, and 124-127 each bind carbamoyl phosphate; these read STRT and HPTQ. Residues Asn-156, Asp-220, and 224 to 225 contribute to the L-ornithine site; that span reads SM. Carbamoyl phosphate-binding positions include 260–261 and Arg-288; that span reads CL.

The protein belongs to the aspartate/ornithine carbamoyltransferase superfamily. OTCase family.

It is found in the cytoplasm. It carries out the reaction carbamoyl phosphate + L-ornithine = L-citrulline + phosphate + H(+). It participates in amino-acid degradation; L-arginine degradation via ADI pathway; carbamoyl phosphate from L-arginine: step 2/2. In terms of biological role, reversibly catalyzes the transfer of the carbamoyl group from carbamoyl phosphate (CP) to the N(epsilon) atom of ornithine (ORN) to produce L-citrulline. The protein is Ornithine carbamoyltransferase of Campylobacter jejuni subsp. doylei (strain ATCC BAA-1458 / RM4099 / 269.97).